Reading from the N-terminus, the 204-residue chain is Small ribosomal subunit protein uS4 (204 aa).

One can recognise an S4 RNA-binding domain in the interval 92 to 156; sequence RRLDALVLRS…SKVPFQVARE (65 aa).

It belongs to the universal ribosomal protein uS4 family. In terms of assembly, part of the 30S ribosomal subunit. Contacts protein S5. The interaction surface between S4 and S5 is involved in control of translational fidelity.

In terms of biological role, one of the primary rRNA binding proteins, it binds directly to 16S rRNA where it nucleates assembly of the body of the 30S subunit. Its function is as follows. With S5 and S12 plays an important role in translational accuracy. This chain is Small ribosomal subunit protein uS4, found in Streptomyces griseus subsp. griseus (strain JCM 4626 / CBS 651.72 / NBRC 13350 / KCC S-0626 / ISP 5235).